Consider the following 91-residue polypeptide: Uteroglobin (91 aa).

A signal peptide spans 1–21 (MKLAITLALVTLALLCSPASA).

This sequence belongs to the secretoglobin family. Antiparallel homodimer; disulfide-linked. Interaction with LMBR1L is controversial. As to expression, synthesized in the uterus and lung.

Its subcellular location is the secreted. Its function is as follows. Uteroglobin binds progesterone specifically and with high affinity. It may regulate progesterone concentrations reaching the blastocyst. It is also a potent inhibitor of phospholipase A2. The chain is Uteroglobin (SCGB1A1) from Oryctolagus cuniculus (Rabbit).